The chain runs to 266 residues: Phosphatidate cytidylyltransferase (266 aa).

Helical transmembrane passes span 16 to 36, 52 to 72, 78 to 98, 101 to 121, 125 to 145, 164 to 184, 186 to 206, and 237 to 257; these read FVLI…LFWA, LFQV…WVAA, PIEC…YQKA, SEAI…FGVY, GAVA…GAFF, LEGA…VGMG, LSGG…VAVF, and LDSM…LEIW.

This sequence belongs to the CDS family.

The protein localises to the cell inner membrane. The enzyme catalyses a 1,2-diacyl-sn-glycero-3-phosphate + CTP + H(+) = a CDP-1,2-diacyl-sn-glycerol + diphosphate. It participates in phospholipid metabolism; CDP-diacylglycerol biosynthesis; CDP-diacylglycerol from sn-glycerol 3-phosphate: step 3/3. This chain is Phosphatidate cytidylyltransferase (cdsA), found in Helicobacter pylori (strain ATCC 700392 / 26695) (Campylobacter pylori).